The sequence spans 333 residues: HTH-type transcriptional repressor PurR (333 aa).

The HTH lacI-type domain occupies 2–56; that stretch reads ATIKDVAKLASVSTTTVSHVINKTRFVAEATQKRVWEAVEELNYAPSAVARSLKC. The H-T-H motif DNA-binding region spans 4 to 23; that stretch reads IKDVAKLASVSTTTVSHVIN. Residues 48-56 mediate DNA binding; that stretch reads SAVARSLKC. Residues Phe-73, Lys-189, Thr-191, Phe-220, and Asp-274 each contribute to the hypoxanthine site.

In terms of assembly, homodimer.

The protein operates within purine metabolism; purine nucleotide biosynthesis [regulation]. Its function is as follows. Is the main repressor of the genes involved in the de novo synthesis of purine nucleotides, regulating purB, purC, purEK, purF, purHD, purL, purMN and guaBA expression. PurR is allosterically activated to bind its cognate DNA by binding the purine corepressors, hypoxanthine or guanine, thereby effecting transcription repression. The chain is HTH-type transcriptional repressor PurR from Aliivibrio salmonicida (strain LFI1238) (Vibrio salmonicida (strain LFI1238)).